Consider the following 716-residue polypeptide: Cyclic nucleotide-gated ion channel 1 (716 aa).

Residues 1–97 are Cytoplasmic-facing; the sequence is MNFRQEKFVR…QGPFLQRWNK (97 aa). A helical transmembrane segment spans residues 98 to 118; that stretch reads IFVLACIIAVSLDPLFFYVPI. Residues 119 to 132 lie on the Extracellular side of the membrane; sequence IDDAKKCLGIDKKM. The chain crosses the membrane as a helical span at residues 133-153; that stretch reads EITASVLRSFTDVFYVLHIIF. At 154–187 the chain is on the cytoplasmic side; the sequence is QFRTGFIAPSSRVFGRGVLVEDKREIAKRYLSSH. Residues 188–208 form a helical membrane-spanning segment; the sequence is FIIDILAVLPLPQMVILIIIP. The Extracellular portion of the chain corresponds to 209–220; that stretch reads HMRGSSSLNTKN. The chain crosses the membrane as a helical span at residues 221-241; the sequence is MLKFIVFFQYIPRFIRIYPLY. Residues 242-259 lie on the Cytoplasmic side of the membrane; it reads KEVTRTSGILTETAWAGA. The helical transmembrane segment at 260–280 threads the bilayer; sequence AFNLFLYMLASHVFGAFWYLF. At 281–379 the chain is on the extracellular side; the sequence is SIERETVCWK…GQNLKTSTYI (99 aa). The helical transmembrane segment at 380–400 threads the bilayer; the sequence is WEICFAVFISIAGLVLFSFLI. The Cytoplasmic portion of the chain corresponds to 401–716; sequence GNMQTYLQST…PAEPDFNSDD (316 aa). A nucleoside 3',5'-cyclic phosphate contacts are provided by residues 486-610 and E557; that span reads MFEK…SKQL. Residues 602-617 are calmodulin-binding; it reads FRRLHSKQLRHTFRYY. One can recognise an IQ domain in the interval 622–651; that stretch reads KTWAACFIQAAWRRYIKKKLEESLKEEENR. A disordered region spans residues 689–716; it reads SVRKPRMPERMPPMLLQKPAEPDFNSDD.

The protein belongs to the cyclic nucleotide-gated cation channel (TC 1.A.1.5) family. In terms of assembly, homotetramer or heterotetramer (Potential). Binds calmodulin-2/3/5 with a higher affinity than calmodulin-1/4. As to expression, expressed in the whole plant but only weakly in roots.

Its subcellular location is the cell membrane. Acts as a cyclic nucleotide-gated ion channel. Can be activated by cyclic AMP which leads to an opening of the cation channel. May be responsible for cAMP-induced calcium entry in cells and thus should be involved in the calcium signal transduction. Could transport K(+), Na(+) and Pb(2+). This chain is Cyclic nucleotide-gated ion channel 1 (CNGC1), found in Arabidopsis thaliana (Mouse-ear cress).